The chain runs to 684 residues: Early phosphoprotein p84 (684 aa).

Disordered stretches follow at residues leucine 166–proline 301, serine 317–alanine 336, valine 357–threonine 393, arginine 407–phenylalanine 452, and serine 569–phenylalanine 657. The span at glutamate 180–glutamate 191 shows a compositional bias: basic and acidic residues. Over residues alanine 201 to glycine 220 the composition is skewed to gly residues. Composition is skewed to basic and acidic residues over residues arginine 232–proline 245 and arginine 258–histidine 272. The Nuclear localization signal motif lies at lysine 261–lysine 264. Positions glycine 285–glycine 296 are enriched in gly residues. Positions asparagine 326–asparagine 335 are enriched in basic residues. Residues serine 359 to serine 377 show a composition bias toward low complexity. Residues serine 425–alanine 442 show a composition bias toward polar residues. Positions proline 578–glycine 587 are enriched in pro residues. Over residues arginine 598 to arginine 608 the composition is skewed to gly residues. The segment covering arginine 612–serine 622 has biased composition (low complexity).

It belongs to the herpesviridae U79/UL112 family. In terms of assembly, isoforms 1, 2, 3 and 4 interacts with themselves and with each other via their shared N-terminal regions; these interactions are important to both their intranuclear targeting and the recruitment of UL44 to subnuclear sites for viral replication.

It is found in the host nucleus. The protein localises to the virion. Needed for efficient replication. Recruits the DNA polymerase processivity factor to pre-replication foci. This is Early phosphoprotein p84 (UL112/UL113) from Homo sapiens (Human).